A 61-amino-acid chain; its full sequence is Large ribosomal subunit protein uL30 (61 aa).

Belongs to the universal ribosomal protein uL30 family. As to quaternary structure, part of the 50S ribosomal subunit.

This Thermosipho melanesiensis (strain DSM 12029 / CIP 104789 / BI429) protein is Large ribosomal subunit protein uL30.